The sequence spans 632 residues: Serine/threonine-protein kinase plk-2 (632 aa).

The disordered stretch occupies residues 1-26 (MQRVQPSAARVKSQKKEKAPPDVPDV). The region spanning 36–287 (YEKGKFLGKG…ARAVCRDHFF (252 aa)) is the Protein kinase domain. ATP contacts are provided by residues 42 to 50 (LGKGGFAHC) and K65. Residue D159 is the Proton acceptor of the active site. A disordered region spans residues 313–334 (AEENVSPSGTIDQRGPHQAGRS). 2 consecutive POLO box domains span residues 405–484 (WISK…YMND) and 506–588 (TLRV…RLVE).

The protein belongs to the protein kinase superfamily. Ser/Thr protein kinase family. CDC5/Polo subfamily. As to quaternary structure, interacts (via POLO box domain) with mex-5 and mex-6. Interacts (via POLO box domain) with him-8 (via N-terminus); the interaction mediates plk-2 recruitment to the pairing region of X chromosomes during meiosis. Interacts with sun-1. May interact with nicotinic acetylcholine receptor. The cofactor is Mg(2+). As to expression, expressed in oocytes.

The protein resides in the nucleus. Its subcellular location is the cytoplasm. It is found in the cytoskeleton. The protein localises to the microtubule organizing center. It localises to the centrosome. The protein resides in the chromosome. Its subcellular location is the centromere. It is found in the kinetochore. It catalyses the reaction L-seryl-[protein] + ATP = O-phospho-L-seryl-[protein] + ADP + H(+). The enzyme catalyses L-threonyl-[protein] + ATP = O-phospho-L-threonyl-[protein] + ADP + H(+). Serine/threonine-protein kinase which plays a role, during oogenesis, in chromosome pairing and synapsis, by facilitating the recruitment and attachment of meiotic chromosomes to the nuclear envelope during prophase. Promotes the localization of brc-1 to the short arm of homologous chromosomes during meiotic prophase I. Regulates the formation of sun-1 patches along the nuclear envelope. Promotes meiotic nuclei apoptosis in response to chromosomal asynapsis. Plays a redundant role with plk-1 in the establishment of cell polarity downstream of mex-5 and mex-6 during the first embryonic cell divisions. Plays a role in nicotinic acetylcholine receptor-mediated sensitivity to nicotine but not levamisole. Regulates motility. This chain is Serine/threonine-protein kinase plk-2, found in Caenorhabditis elegans.